Here is a 332-residue protein sequence, read N- to C-terminus: Small ribosomal subunit biogenesis GTPase RsgA (332 aa).

The CP-type G domain occupies 103–259; that stretch reads RQQLIAANLD…LIDTPGMREL (157 aa). Residues 148–151 and 201–209 each bind GTP; these read TKVD and GSSGAGKST. Positions 281, 286, 288, and 294 each coordinate Zn(2+).

This sequence belongs to the TRAFAC class YlqF/YawG GTPase family. RsgA subfamily. Monomer. Associates with 30S ribosomal subunit, binds 16S rRNA. Zn(2+) is required as a cofactor.

It is found in the cytoplasm. Its function is as follows. One of several proteins that assist in the late maturation steps of the functional core of the 30S ribosomal subunit. Helps release RbfA from mature subunits. May play a role in the assembly of ribosomal proteins into the subunit. Circularly permuted GTPase that catalyzes slow GTP hydrolysis, GTPase activity is stimulated by the 30S ribosomal subunit. This Xylella fastidiosa (strain M23) protein is Small ribosomal subunit biogenesis GTPase RsgA.